Reading from the N-terminus, the 327-residue chain is Zinc transport protein ZntB (327 aa).

Residues 1–273 (MEAIKGSDVN…ARRTYTMSLM (273 aa)) are Cytoplasmic-facing. A helical membrane pass occupies residues 274 to 294 (AMVFLPSTFLTGLFGVNLGGI). Residues 295-300 (PGGGWQ) are Periplasmic-facing. The chain crosses the membrane as a helical span at residues 301 to 321 (FGFSIFCILLVVLIGGVALWL). At 322–327 (HRSKWL) the chain is on the cytoplasmic side.

Belongs to the CorA metal ion transporter (MIT) (TC 1.A.35) family.

The protein resides in the cell inner membrane. The enzyme catalyses Zn(2+)(out) + H(+)(out) = Zn(2+)(in) + H(+)(in). Functionally, zinc transporter. Acts as a Zn(2+):proton symporter, which likely mediates zinc ion uptake. The sequence is that of Zinc transport protein ZntB from Escherichia coli O8 (strain IAI1).